We begin with the raw amino-acid sequence, 648 residues long: MDDTKKRIHKYIEKHDLIRSDDKLLVAVSGGPDSFALLHFLWSANLVPKEAIAVAHLNHHLRENAEKEQLAVQTFCEERDIPFFIEEVDVKKRAEKLQKGIEETARIVRYDFFEKVMAENNINKLVLAHHADDQIETILMRLVRGSSSIGWSGIQPKREVRGGYAIRPFLPITKAEIIEYATKHALPYEIDESNTSQEYTRNRYRTQLLPFLSKENPAVYEHFKRFSEETSEDFQFLEELASNLLKKNLIQNGKQSTLLLSDFKNEANPLQRRAIHLLLMYLYNDDGRVITVNHIYQIIQMIQSENPSSSIDLPKKLTVIRSYNELHFQFGERHAPPEFYHQLELNDRIELDNKASIRLKLKSSVVQTNGLNGMLLDAEDITLPLIVRNRVNGDRMTMKGQAGSKKLKDIFIDAKIPRQERDNLPVITDYTGKILWVPGVKKSAYDREFSRSKKQYIIRYTRNIGGNESMHNDIQKVLISEDELQEKIRELGRELTAEYEGRNPLVVGVLKGATPFMTDLLKRIDTYLEMDFMDVSSYGNGTVSSGEVKIIKDLNASVEGRDVLIIEDIIDSGRTLSYLVDLIKYRKAKSVKLVTLLDKPAGRNVAIEADYVGFVVPNEFVVGYGLDYAERYRNLPYIGILKPEIYSE.

ATP is bound at residue 29 to 34 (SGGPDS). Asp627 provides a ligand contact to Mg(2+).

In the N-terminal section; belongs to the tRNA(Ile)-lysidine synthase family. This sequence in the C-terminal section; belongs to the purine/pyrimidine phosphoribosyltransferase family. Requires Mg(2+) as cofactor.

The protein localises to the cytoplasm. It carries out the reaction IMP + diphosphate = hypoxanthine + 5-phospho-alpha-D-ribose 1-diphosphate. The enzyme catalyses GMP + diphosphate = guanine + 5-phospho-alpha-D-ribose 1-diphosphate. It catalyses the reaction cytidine(34) in tRNA(Ile2) + L-lysine + ATP = lysidine(34) in tRNA(Ile2) + AMP + diphosphate + H(+). Its function is as follows. Ligates lysine onto the cytidine present at position 34 of the AUA codon-specific tRNA(Ile) that contains the anticodon CAU, in an ATP-dependent manner. Cytidine is converted to lysidine, thus changing the amino acid specificity of the tRNA from methionine to isoleucine. This is Bifunctional protein TilS/HprT (tilS/hprT) from Listeria innocua serovar 6a (strain ATCC BAA-680 / CLIP 11262).